Reading from the N-terminus, the 345-residue chain is MVLFKAKFSFQRRVKLAQTLWLLSWLSVLVGCLTFGMGIFLKVQLWIHNEVMENTSAHAVPNTVITAGLVGILLGIYAGKVSQASMDVTKYQRWKSFMMPFFFLAILSCLVCLAALVLSVALRGTLEESLKIGLKNAIRFYKDTDTPGRCYQKRSMDKLQMDFQCCGNNHPKDWFEVQWISNRYLDFSSKEVKDRIKSNVDGRYLMDSVPFSCCNPSSPRPCIQMQITNNSAHYSYNYQSDELNIWVRGCREALLSYYTGIMATNGAAVTLSFLLQASVLVSLRYLHTSMDKISGPDDMEADTEGFILEKGVTETMNTTLEKMKGLFMSNQVETAEGGGEAAAAS.

Topologically, residues 1–24 (MVLFKAKFSFQRRVKLAQTLWLLS) are cytoplasmic. A helical transmembrane segment spans residues 25–43 (WLSVLVGCLTFGMGIFLKV). Topologically, residues 44 to 61 (QLWIHNEVMENTSAHAVP) are lumenal. Asn-54 carries N-linked (GlcNAc...) asparagine glycosylation. The chain crosses the membrane as a helical span at residues 62–80 (NTVITAGLVGILLGIYAGK). Over 81–99 (VSQASMDVTKYQRWKSFMM) the chain is Cytoplasmic. A helical transmembrane segment spans residues 100–123 (PFFFLAILSCLVCLAALVLSVALR). The Lumenal portion of the chain corresponds to 124–264 (GTLEESLKIG…LSYYTGIMAT (141 aa)). Asn-229 carries an N-linked (GlcNAc...) asparagine glycan. A helical transmembrane segment spans residues 265 to 290 (NGAAVTLSFLLQASVLVSLRYLHTSM). At 291–345 (DKISGPDDMEADTEGFILEKGVTETMNTTLEKMKGLFMSNQVETAEGGGEAAAAS) the chain is on the cytoplasmic side.

This sequence belongs to the PRPH2/ROM1 family. Homodimer; disulfide-linked. Rod specific.

The protein localises to the membrane. In Xenopus laevis (African clawed frog), this protein is RDS/peripherin-like protein xRDS35 (rds35).